The chain runs to 189 residues: GTP cyclohydrolase 1 (189 aa).

Residues Cys78, His81, and Cys150 each contribute to the Zn(2+) site.

This sequence belongs to the GTP cyclohydrolase I family. In terms of assembly, homomer.

It carries out the reaction GTP + H2O = 7,8-dihydroneopterin 3'-triphosphate + formate + H(+). The protein operates within cofactor biosynthesis; 7,8-dihydroneopterin triphosphate biosynthesis; 7,8-dihydroneopterin triphosphate from GTP: step 1/1. The chain is GTP cyclohydrolase 1 from Bacillus cytotoxicus (strain DSM 22905 / CIP 110041 / 391-98 / NVH 391-98).